A 365-amino-acid polypeptide reads, in one-letter code: Putative outer membrane porin protein NmpC (365 aa).

The first 23 residues, 1 to 23 (MKKLTVAISAVAASVLMAMSAQA), serve as a signal peptide directing secretion.

This sequence belongs to the Gram-negative porin family. As to quaternary structure, homotrimer.

Its subcellular location is the cell outer membrane. This chain is Putative outer membrane porin protein NmpC (nmpC), found in Escherichia coli (strain K12).